A 202-amino-acid chain; its full sequence is N-(5'-phosphoribosyl)anthranilate isomerase (202 aa).

It belongs to the TrpF family.

The catalysed reaction is N-(5-phospho-beta-D-ribosyl)anthranilate = 1-(2-carboxyphenylamino)-1-deoxy-D-ribulose 5-phosphate. The protein operates within amino-acid biosynthesis; L-tryptophan biosynthesis; L-tryptophan from chorismate: step 3/5. In Listeria welshimeri serovar 6b (strain ATCC 35897 / DSM 20650 / CCUG 15529 / CIP 8149 / NCTC 11857 / SLCC 5334 / V8), this protein is N-(5'-phosphoribosyl)anthranilate isomerase.